A 318-amino-acid chain; its full sequence is 2-keto-3-deoxygluconate permease (318 aa).

10 helical membrane-spanning segments follow: residues 10–30 (IPGGLMLVPLFLGALCNTFTP), 42–62 (GLITGTIPILAVWFFCMGASI), 76–96 (VLVVTKIATAWVVALIAGTFL), 105–125 (MLAGISVLALVAAMDMTNGGL), 139–159 (AGAFVLMSLESGPLMTMVILG), 163–183 (IATFEPQLFVGAVLPFLIGFA), 199–219 (VQTLIPFFAFALGNTINLSVI), 224–244 (FAGIFLGLLVIVVTGIPLILA), 263–283 (AGAAVATPLLIANMAPEFAPV), and 289–309 (ALVATSVIVTSVLVPIITALW).

Belongs to the KdgT transporter family.

It is found in the cell inner membrane. The catalysed reaction is 2-dehydro-3-deoxy-D-gluconate(in) + H(+)(in) = 2-dehydro-3-deoxy-D-gluconate(out) + H(+)(out). In terms of biological role, catalyzes the proton-dependent uptake of 2-keto-3-deoxygluconate (KDG) into the cell. The chain is 2-keto-3-deoxygluconate permease from Pectobacterium carotovorum subsp. carotovorum (Erwinia carotovora subsp. carotovora).